The following is a 94-amino-acid chain: CRISPR-associated endoribonuclease Cas2 (94 aa).

Residue Asp10 participates in Mg(2+) binding.

This sequence belongs to the CRISPR-associated endoribonuclease Cas2 protein family. Homodimer, forms a heterotetramer with a Cas1 homodimer. It depends on Mg(2+) as a cofactor.

CRISPR (clustered regularly interspaced short palindromic repeat), is an adaptive immune system that provides protection against mobile genetic elements (viruses, transposable elements and conjugative plasmids). CRISPR clusters contain sequences complementary to antecedent mobile elements and target invading nucleic acids. CRISPR clusters are transcribed and processed into CRISPR RNA (crRNA). Functions as a ssRNA-specific endoribonuclease. Involved in the integration of spacer DNA into the CRISPR cassette. This chain is CRISPR-associated endoribonuclease Cas2, found in Leptospira interrogans serogroup Icterohaemorrhagiae serovar Lai (strain 56601).